We begin with the raw amino-acid sequence, 260 residues long: Indole-3-glycerol phosphate synthase (260 aa).

It belongs to the TrpC family.

It catalyses the reaction 1-(2-carboxyphenylamino)-1-deoxy-D-ribulose 5-phosphate + H(+) = (1S,2R)-1-C-(indol-3-yl)glycerol 3-phosphate + CO2 + H2O. Its pathway is amino-acid biosynthesis; L-tryptophan biosynthesis; L-tryptophan from chorismate: step 4/5. The polypeptide is Indole-3-glycerol phosphate synthase (Staphylococcus aureus (strain MRSA252)).